The chain runs to 504 residues: MKMRPEEISSIIMKQIEQYNQEVQVVNFGTVFQVGDGIARIYGLEKVMAGELLEFEDGTIGIALNLEAKNVGAVLMGDGLKIKEGSKVRATGKVAQIAVGEGYLGRVVDSLARPIDGKGDIASDDTRLIESPAPGIISRRSVHEPLQTGLIAVDAMIPIGRGQRELIIGDRQTGKTAIAIDTILNQKGKNVICVYVAIGQKASSVAQVVNTLRERGALDYTVIVTANADSAATLQYLAPYTGATIAEYFMYTNRHTLVIYDDLSKQAQAYREMSLLLRRPPGREAYPGDVFYLHSRLLERAAKLNDALGSGSMTALPIVETQEGDVSAYIPTNVISITDGQIFLSADIFNSGVRPAINVGISVSRVGSAAQPKAMKQVAGSLKLQLAQFEELRAFSQFASDLDQATQNQLARGARLVEILKQAQNSPLGLAEQVASIYAGNNGYFDNLQVLQVRPFLIGLRQLLATKYSKYGEIVASAQTLTPEAETILKQAITEYLDEFGAKK.

169–176 lines the ATP pocket; the sequence is GDRQTGKT.

This sequence belongs to the ATPase alpha/beta chains family. As to quaternary structure, F-type ATPases have 2 components, CF(1) - the catalytic core - and CF(0) - the membrane proton channel. CF(1) has five subunits: alpha(3), beta(3), gamma(1), delta(1), epsilon(1). CF(0) has four main subunits: a, b, b' and c.

It is found in the plastid. Its subcellular location is the chloroplast thylakoid membrane. It carries out the reaction ATP + H2O + 4 H(+)(in) = ADP + phosphate + 5 H(+)(out). In terms of biological role, produces ATP from ADP in the presence of a proton gradient across the membrane. The alpha chain is a regulatory subunit. The sequence is that of ATP synthase subunit alpha, chloroplastic from Stigeoclonium helveticum (Green alga).